The sequence spans 331 residues: DNA-directed RNA polymerase subunit alpha (331 aa).

The tract at residues 1-233 is alpha N-terminal domain (alpha-NTD); that stretch reads MVREKVTVST…DLFIPFLHAE (233 aa). The tract at residues 265–331 is alpha C-terminal domain (alpha-CTD); the sequence is KEIELKYIFI…GILEKHFTID (67 aa).

This sequence belongs to the RNA polymerase alpha chain family. In terms of assembly, in plastids the minimal PEP RNA polymerase catalytic core is composed of four subunits: alpha, beta, beta', and beta''. When a (nuclear-encoded) sigma factor is associated with the core the holoenzyme is formed, which can initiate transcription.

The protein resides in the plastid. It localises to the chloroplast. The enzyme catalyses RNA(n) + a ribonucleoside 5'-triphosphate = RNA(n+1) + diphosphate. Functionally, DNA-dependent RNA polymerase catalyzes the transcription of DNA into RNA using the four ribonucleoside triphosphates as substrates. The protein is DNA-directed RNA polymerase subunit alpha of Vitis vinifera (Grape).